The sequence spans 51 residues: Large ribosomal subunit protein eL39-like (51 aa).

This sequence belongs to the eukaryotic ribosomal protein eL39 family. Component of a male germ cell-specific 60S large ribosomal subunit (LSU), which contains RPL10L and RPL39L, instead of RPL10 and RPL39 paralogs. The composition of the rest of the complex is similar to classical ribosomes. In terms of tissue distribution, highly expressed in spermatocytes and spermatids. Highly expressed in embryonic stem cells.

Its subcellular location is the cytoplasm. In terms of biological role, male germ cell-specific component of the ribosome, which is required for the formation of sperm and male fertility. Replaces the RPL39 paralog in the ribosome of male germ cells. The ribosome is a large ribonucleoprotein complex responsible for the synthesis of proteins in the cell. The male germ cell-specific ribosome displays a ribosomal polypeptide exit tunnel of distinct size and charge states compared with the classical ribosome. It is responsible for regulating the biosynthesis and folding of a subset of male germ-cell-specific proteins that are essential for the formation of sperm. This chain is Large ribosomal subunit protein eL39-like, found in Mus musculus (Mouse).